A 304-amino-acid chain; its full sequence is Bifunctional protein FolD (304 aa).

Residues 176 to 178 (GAS), Ile-201, and Ile-242 each bind NADP(+).

Belongs to the tetrahydrofolate dehydrogenase/cyclohydrolase family. In terms of assembly, homodimer.

The catalysed reaction is (6R)-5,10-methylene-5,6,7,8-tetrahydrofolate + NADP(+) = (6R)-5,10-methenyltetrahydrofolate + NADPH. It carries out the reaction (6R)-5,10-methenyltetrahydrofolate + H2O = (6R)-10-formyltetrahydrofolate + H(+). Its pathway is one-carbon metabolism; tetrahydrofolate interconversion. In terms of biological role, catalyzes the oxidation of 5,10-methylenetetrahydrofolate to 5,10-methenyltetrahydrofolate and then the hydrolysis of 5,10-methenyltetrahydrofolate to 10-formyltetrahydrofolate. In Gluconobacter oxydans (strain 621H) (Gluconobacter suboxydans), this protein is Bifunctional protein FolD.